A 485-amino-acid chain; its full sequence is NADH-quinone oxidoreductase subunit N (485 aa).

14 helical membrane-spanning segments follow: residues 8–28 (LIAL…MLCI), 35–55 (FINS…LWFV), 75–95 (FYTG…YAWL), 105–125 (FYLL…ANHL), 127–147 (ALFL…GYAF), 159–179 (YTLL…LVYA), 203–223 (LLAG…LVPF), 235–255 (PVPV…AVVM), 271–291 (LVLA…ALSQ), 303–323 (IAHL…TLAL), 326–346 (VGVY…VVSL), 371–393 (LLSS…LGFI), 406–426 (HLGW…FYYL), and 449–469 (ALTA…LLGL).

Belongs to the complex I subunit 2 family. In terms of assembly, NDH-1 is composed of 13 different subunits. Subunits NuoA, H, J, K, L, M, N constitute the membrane sector of the complex.

Its subcellular location is the cell inner membrane. The catalysed reaction is a quinone + NADH + 5 H(+)(in) = a quinol + NAD(+) + 4 H(+)(out). Functionally, NDH-1 shuttles electrons from NADH, via FMN and iron-sulfur (Fe-S) centers, to quinones in the respiratory chain. The immediate electron acceptor for the enzyme in this species is believed to be ubiquinone. Couples the redox reaction to proton translocation (for every two electrons transferred, four hydrogen ions are translocated across the cytoplasmic membrane), and thus conserves the redox energy in a proton gradient. This chain is NADH-quinone oxidoreductase subunit N, found in Sodalis glossinidius (strain morsitans).